A 146-amino-acid chain; its full sequence is Large ribosomal subunit protein uL15 (146 aa).

The segment covering 1–13 has biased composition (basic and acidic residues); sequence MKLHELKAAEGSR. The tract at residues 1–56 is disordered; it reads MKLHELKAAEGSRRVRNRVGRGAGSGNGKTSGRGQKGQKARSGGGVRPGFEGGQLP. 2 stretches are compositionally biased toward gly residues: residues 21–35 and 42–52; these read RGAG…GRGQ and SGGGVRPGFEG.

Belongs to the universal ribosomal protein uL15 family. Part of the 50S ribosomal subunit.

In terms of biological role, binds to the 23S rRNA. The polypeptide is Large ribosomal subunit protein uL15 (Staphylococcus haemolyticus (strain JCSC1435)).